We begin with the raw amino-acid sequence, 241 residues long: Orotidine 5'-phosphate decarboxylase (241 aa).

Substrate contacts are provided by residues aspartate 15, lysine 37, aspartate 64 to threonine 73, threonine 126, arginine 187, glutamine 196, glycine 216, and arginine 217. Residue lysine 66 is the Proton donor of the active site.

It belongs to the OMP decarboxylase family. Type 1 subfamily. In terms of assembly, homodimer.

It carries out the reaction orotidine 5'-phosphate + H(+) = UMP + CO2. Its pathway is pyrimidine metabolism; UMP biosynthesis via de novo pathway; UMP from orotate: step 2/2. In terms of biological role, catalyzes the decarboxylation of orotidine 5'-monophosphate (OMP) to uridine 5'-monophosphate (UMP). This is Orotidine 5'-phosphate decarboxylase from Trichlorobacter lovleyi (strain ATCC BAA-1151 / DSM 17278 / SZ) (Geobacter lovleyi).